The primary structure comprises 715 residues: Polyribonucleotide nucleotidyltransferase (715 aa).

Mg(2+) is bound by residues Asp487 and Asp493. In terms of domain architecture, KH spans 554–613 (PRIETFKIATDKIREVIGTGGKVIREIVEKTGAKVNIDDDGTVKVASSDGESIKAAIKWI). The S1 motif domain maps to 623 to 691 (NAIYDGTVVK…DRGKTRLSMK (69 aa)). The tract at residues 696–715 (ETGEDLEAKQKAAEGATAAE) is disordered.

It belongs to the polyribonucleotide nucleotidyltransferase family. It depends on Mg(2+) as a cofactor.

The protein localises to the cytoplasm. It carries out the reaction RNA(n+1) + phosphate = RNA(n) + a ribonucleoside 5'-diphosphate. Its function is as follows. Involved in mRNA degradation. Catalyzes the phosphorolysis of single-stranded polyribonucleotides processively in the 3'- to 5'-direction. This Rhodopseudomonas palustris (strain BisB18) protein is Polyribonucleotide nucleotidyltransferase.